Reading from the N-terminus, the 334-residue chain is Cyclin N-terminal domain-containing protein 1 (334 aa).

Residues Asn-29–Asn-180 form the Cyclin N-terminal domain.

As to quaternary structure, interacts with PRR19; this interaction promotes crossover formation. Interacts with RFC3 and RFC4; these interactions facilitate crossover formation. Interacts with CDC34; this interaction regulates the cell-cycle progression. In terms of tissue distribution, isoform 2 is expressed in spermatocyte.

Its subcellular location is the nucleus. It is found in the cytoplasm. The protein localises to the chromosome. Plays a role in the different steps of crossover formation during meiotic recombination. Participates in the crossover differentiation step of crossover-specific recombination intermediates through its interaction with PRR19. In addition, stimulates crossover formation through the interactions with RFC3 and RFC4 and simultaneously regulates cell-cycle progression through interactions with CDC34 and subsequent ubiquitination of WEE1. May also participates in an active deselection process that destabilizes or removes excess pre-CO intermediates. The sequence is that of Cyclin N-terminal domain-containing protein 1 from Mus musculus (Mouse).